A 108-amino-acid chain; its full sequence is Vitelline membrane protein 15a-1 (108 aa).

The signal sequence occupies residues 1-18 (MNKFIILAIFALAVGAMA). One can recognise a VM domain in the interval 52 to 88 (HAPHAKCGANLLVGCAPSVAHVPCVPLPGHAPAHGYG). Residues 87 to 108 (YGHAPAPHYRAPESDSFDQFEE) are disordered.

The protein belongs to the vitelline membrane family. In terms of tissue distribution, expressed in the middle and posterior regions of the follicle cells.

It localises to the secreted. This Aedes aegypti (Yellowfever mosquito) protein is Vitelline membrane protein 15a-1.